Here is a 198-residue protein sequence, read N- to C-terminus: Imidazoleglycerol-phosphate dehydratase (198 aa).

The protein belongs to the imidazoleglycerol-phosphate dehydratase family.

Its subcellular location is the cytoplasm. The enzyme catalyses D-erythro-1-(imidazol-4-yl)glycerol 3-phosphate = 3-(imidazol-4-yl)-2-oxopropyl phosphate + H2O. It functions in the pathway amino-acid biosynthesis; L-histidine biosynthesis; L-histidine from 5-phospho-alpha-D-ribose 1-diphosphate: step 6/9. The sequence is that of Imidazoleglycerol-phosphate dehydratase from Gluconobacter oxydans (strain 621H) (Gluconobacter suboxydans).